We begin with the raw amino-acid sequence, 424 residues long: Serine hydroxymethyltransferase (424 aa).

Residues Leu-123 and 127-129 contribute to the (6S)-5,6,7,8-tetrahydrofolate site; that span reads GHL. Position 232 is an N6-(pyridoxal phosphate)lysine (Lys-232). (6S)-5,6,7,8-tetrahydrofolate is bound at residue Glu-245.

The protein belongs to the SHMT family. Homodimer. The cofactor is pyridoxal 5'-phosphate.

The protein resides in the cytoplasm. The catalysed reaction is (6R)-5,10-methylene-5,6,7,8-tetrahydrofolate + glycine + H2O = (6S)-5,6,7,8-tetrahydrofolate + L-serine. The protein operates within one-carbon metabolism; tetrahydrofolate interconversion. It participates in amino-acid biosynthesis; glycine biosynthesis; glycine from L-serine: step 1/1. Catalyzes the reversible interconversion of serine and glycine with tetrahydrofolate (THF) serving as the one-carbon carrier. This reaction serves as the major source of one-carbon groups required for the biosynthesis of purines, thymidylate, methionine, and other important biomolecules. Also exhibits THF-independent aldolase activity toward beta-hydroxyamino acids, producing glycine and aldehydes, via a retro-aldol mechanism. The sequence is that of Serine hydroxymethyltransferase from Kocuria rhizophila (strain ATCC 9341 / DSM 348 / NBRC 103217 / DC2201).